The primary structure comprises 199 residues: Peroxiredoxin-1 (199 aa).

Residue Ser2 is modified to N-acetylserine. The Thioredoxin domain maps to 6–165 (AKIGYPAPNF…ILRLVQAFQF (160 aa)). Lys7 carries the N6-acetyllysine; alternate modification. A Glycyl lysine isopeptide (Lys-Gly) (interchain with G-Cter in SUMO2); alternate cross-link involves residue Lys7. Lys16 bears the N6-acetyllysine mark. Ser32 is modified (phosphoserine). Cys52 functions as the Cysteine sulfenic acid (-SOH) intermediate in the catalytic mechanism. Residue Thr90 is modified to Phosphothreonine. Residue Lys120 forms a Glycyl lysine isopeptide (Lys-Gly) (interchain with G-Cter in SUMO2) linkage. Lys136 is subject to N6-acetyllysine. A disordered region spans residues 176–199 (GWKPGSDTIKPDVQKSKEYFSKQK). Residues 184 to 199 (IKPDVQKSKEYFSKQK) are compositionally biased toward basic and acidic residues. Lys185 participates in a covalent cross-link: Glycyl lysine isopeptide (Lys-Gly) (interchain with G-Cter in SUMO1). Lys197 is subject to N6-acetyllysine.

This sequence belongs to the peroxiredoxin family. AhpC/Prx1 subfamily. In terms of assembly, homodimer; disulfide-linked, upon oxidation. 5 homodimers assemble to form a ring-like decamer. Interacts with GDPD5; forms a mixed-disulfide with GDPD5. Interacts with SESN1 and SESN2. Interacts with FAM107A. In terms of processing, phosphorylated on Thr-90 during the M-phase, which leads to a decrease in enzymatic activity. Post-translationally, acetylation increases reducing activity and resistance to superoxidation. Deacetylated by HDAC6 which decreases reducing activity.

Its subcellular location is the cytoplasm. The enzyme catalyses a hydroperoxide + [thioredoxin]-dithiol = an alcohol + [thioredoxin]-disulfide + H2O. In terms of biological role, thiol-specific peroxidase that catalyzes the reduction of hydrogen peroxide and organic hydroperoxides to water and alcohols, respectively. Plays a role in cell protection against oxidative stress by detoxifying peroxides and as sensor of hydrogen peroxide-mediated signaling events. Might participate in the signaling cascades of growth factors and tumor necrosis factor-alpha by regulating the intracellular concentrations of H(2)O(2). Reduces an intramolecular disulfide bond in GDPD5 that gates the ability to GDPD5 to drive postmitotic motor neuron differentiation. The protein is Peroxiredoxin-1 (PRDX1) of Cricetulus griseus (Chinese hamster).